Consider the following 208-residue polypeptide: MTNVQRSRRQVRLSRALGIALTPKAQRIFEKRPYAPGEHGRDRRRTESDYAVRMREKQRLRAQYGISEKQLRAAYEKATRTAGQTGNAMLTDLETRLDNLVLRAGFARTTAQARQFVVHRHILVDGNIVDRPSYRVKPGQTIQVKAKSQTMVPFQIAAEGVHRDVLPAVPGYLDVNLPSLKATVTRKPEVEEIPVQVNIQYVVEFYAR.

The interval 30 to 49 (EKRPYAPGEHGRDRRRTESD) is disordered. In terms of domain architecture, S4 RNA-binding spans 95–161 (TRLDNLVLRA…VPFQIAAEGV (67 aa)).

This sequence belongs to the universal ribosomal protein uS4 family. In terms of assembly, part of the 30S ribosomal subunit. Contacts protein S5. The interaction surface between S4 and S5 is involved in control of translational fidelity.

One of the primary rRNA binding proteins, it binds directly to 16S rRNA where it nucleates assembly of the body of the 30S subunit. Its function is as follows. With S5 and S12 plays an important role in translational accuracy. In Bifidobacterium longum (strain DJO10A), this protein is Small ribosomal subunit protein uS4.